Reading from the N-terminus, the 331-residue chain is Ribosomal RNA small subunit methyltransferase H (331 aa).

S-adenosyl-L-methionine-binding positions include 38–40, D56, F83, D100, and Q107; that span reads GGY. Residues 287-331 are disordered; it reads DEAELAENPRARSARLRVGVRTDAPAGKVDPQALGTPLIPKKGRR.

Belongs to the methyltransferase superfamily. RsmH family.

The protein resides in the cytoplasm. The enzyme catalyses cytidine(1402) in 16S rRNA + S-adenosyl-L-methionine = N(4)-methylcytidine(1402) in 16S rRNA + S-adenosyl-L-homocysteine + H(+). Functionally, specifically methylates the N4 position of cytidine in position 1402 (C1402) of 16S rRNA. The chain is Ribosomal RNA small subunit methyltransferase H from Cereibacter sphaeroides (strain ATCC 17023 / DSM 158 / JCM 6121 / CCUG 31486 / LMG 2827 / NBRC 12203 / NCIMB 8253 / ATH 2.4.1.) (Rhodobacter sphaeroides).